The following is a 238-amino-acid chain: 3-dehydroquinate dehydratase (238 aa).

3-dehydroquinate-binding positions include 35-37 and R70; that span reads ELR. H133 acts as the Proton donor/acceptor in catalysis. K160 serves as the catalytic Schiff-base intermediate with substrate. 2 residues coordinate 3-dehydroquinate: R202 and Q225.

The protein belongs to the type-I 3-dehydroquinase family. As to quaternary structure, homodimer.

The enzyme catalyses 3-dehydroquinate = 3-dehydroshikimate + H2O. Its pathway is metabolic intermediate biosynthesis; chorismate biosynthesis; chorismate from D-erythrose 4-phosphate and phosphoenolpyruvate: step 3/7. In terms of biological role, involved in the third step of the chorismate pathway, which leads to the biosynthesis of aromatic amino acids. Catalyzes the cis-dehydration of 3-dehydroquinate (DHQ) and introduces the first double bond of the aromatic ring to yield 3-dehydroshikimate. This is 3-dehydroquinate dehydratase from Staphylococcus aureus (strain bovine RF122 / ET3-1).